Reading from the N-terminus, the 548-residue chain is Kinetochore and Eb1-associated basic protein (548 aa).

Disordered regions lie at residues 1-51 (MSSM…PKHP) and 82-181 (YRSS…IRPK). 3 stretches are compositionally biased toward basic and acidic residues: residues 20-29 (RTKELLERQR), 104-116 (RTWE…EFRS), and 127-141 (PRPR…DLRS). Residues 100-253 (QNRQRTWEGP…TTSKRKLDFK (154 aa)) form an important for kinetochore and microtubule localization region. The segment covering 144 to 155 (QGTPATKIPSQR) has biased composition (polar residues). The SXIP motif 1 signature appears at 149–152 (TKIP). The segment covering 156 to 165 (NPKENQELSK) has biased composition (basic and acidic residues). Positions 166–175 (SHTCIPSSEP) are enriched in polar residues. The SXIP motif 2 motif lies at 168–171 (TCIP). The segment at 237–372 (SDKGIKLTTS…MCALPVVSEK (136 aa)) is CH (calponin-homology)-like region, which is not required for kinetochore and microtubule localization. The stretch at 386 to 457 (YDVMSLQQKF…LQLQRLRLQE (72 aa)) forms a coiled coil.

Interacts with Eb1 via the two SxIP motifs; the interaction is not required for kebab kinetochore localization.

The protein resides in the cytoplasm. Its subcellular location is the perinuclear region. It localises to the chromosome. The protein localises to the centromere. It is found in the kinetochore. The protein resides in the cytoskeleton. Its subcellular location is the spindle. The polypeptide is Kinetochore and Eb1-associated basic protein (Drosophila melanogaster (Fruit fly)).